The following is a 760-amino-acid chain: uncharacterized protein (760 aa).

The segment covering 578–587 (RNRKQSKLRI) has biased composition (basic residues). The segment at 578 to 604 (RNRKQSKLRISKQQEIQPQKEESVKKE) is disordered. A compositionally biased stretch (basic and acidic residues) spans 595-604 (PQKEESVKKE).

It localises to the mitochondrion. This is an uncharacterized protein from Dictyostelium citrinum (Slime mold).